The chain runs to 476 residues: Serine/threonine-protein kinase PBL36 (476 aa).

One can recognise a Protein kinase domain in the interval 126 to 412 (FRPESLLGEG…VEALKPLPNL (287 aa)). ATP contacts are provided by residues 132–140 (LGEGGFGCV) and Lys164. Residue Tyr209 is modified to Phosphotyrosine. The Proton acceptor role is filled by Asp259. Phosphoserine occurs at positions 263 and 293. 2 positions are modified to phosphothreonine: Thr294 and Thr299. Tyr307 bears the Phosphotyrosine mark. A disordered region spans residues 431–476 (NGVRTQGGGFVSRNGPPMRSLSSLNLPQASPYRYARQSPKPKGKEP).

The protein belongs to the protein kinase superfamily. Ser/Thr protein kinase family. As to quaternary structure, interacts with SD129. Post-translationally, phosphorylated by SD129 in response to the pathogen-associated molecular pattern (PAMP) 3-OH-C10:0, a medium-chain 3-hydroxy fatty acid.

Its subcellular location is the cell membrane. The catalysed reaction is L-seryl-[protein] + ATP = O-phospho-L-seryl-[protein] + ADP + H(+). It catalyses the reaction L-threonyl-[protein] + ATP = O-phospho-L-threonyl-[protein] + ADP + H(+). Its function is as follows. Involved in chitin-triggered immune signaling and is required for reactive oxygen species (ROS) production. Acts downstream of SD129 in defense signaling triggered by the pathogen-associated molecular pattern (PAMP) 3-OH-C10:0, a medium-chain 3-hydroxy fatty acid. This chain is Serine/threonine-protein kinase PBL36, found in Arabidopsis thaliana (Mouse-ear cress).